The primary structure comprises 714 residues: Probable serine/threonine-protein kinase At1g09600 (714 aa).

Residues 1–64 (MGCNCTKGTR…NVGFEERSND (64 aa)) are disordered. Gly-2 carries the N-myristoyl glycine lipid modification. The segment covering 16-27 (VDNSNSIVSNVN) has biased composition (low complexity). Basic residues predominate over residues 31-46 (RRSKPKKTPKKKKKSK). One can recognise a Protein kinase domain in the interval 163-447 (FEKLEKIGQG…TASALESEFF (285 aa)). ATP is bound by residues 169–177 (IGQGTYSSV) and Lys-192. Catalysis depends on Asp-287, which acts as the Proton acceptor. A compositionally biased stretch (basic and acidic residues) spans 471 to 498 (KAQEEEAKRKKDTSSKQNDSKQVSRESK). 2 disordered regions span residues 471-579 (KAQE…RKEL) and 693-714 (VDKK…ANGR). 2 stretches are compositionally biased toward polar residues: residues 506 to 528 (NAES…NSDK) and 556 to 573 (GVSS…GSSR).

Belongs to the protein kinase superfamily. Ser/Thr protein kinase family.

In Arabidopsis thaliana (Mouse-ear cress), this protein is Probable serine/threonine-protein kinase At1g09600.